The sequence spans 284 residues: Protein pxr1 (284 aa).

The 47-residue stretch at 25–71 (TNRLGFKLLSSYGWVNGNGLGEKQHGRIHNIKVSLKDDTLGIGAKAT) folds into the G-patch domain. A disordered region spans residues 149-253 (DEDRVCEDAS…KVKEGNRPAS (105 aa)). Serine 159 and serine 160 each carry phosphoserine. Composition is skewed to basic residues over residues 166-181 (EKRK…KKKT) and 196-206 (TKKKKKEHKKK). Basic and acidic residues-rich tracts occupy residues 207 to 224 (DKES…DKEE) and 233 to 249 (KDKP…KEGN).

This sequence belongs to the PINX1 family.

The protein resides in the nucleus. The protein localises to the nucleolus. Its function is as follows. Involved in rRNA-processing at A0, A1 and A2 sites and negatively regulates telomerase. The sequence is that of Protein pxr1 (pxr1) from Schizosaccharomyces pombe (strain 972 / ATCC 24843) (Fission yeast).